A 622-amino-acid polypeptide reads, in one-letter code: Apical membrane antigen 1 (622 aa).

An N-terminal signal peptide occupies residues 1–24 (MRKLYCVLLLSAFEFTYMINFGRG). The Extracellular segment spans residues 25–546 (QNYWEHPYQN…EHKPTYDNMK (522 aa)). Intrachain disulfides connect C149–C302, C217–C247, C263–C275, C320–C418, and C337–C409. N162 carries an N-linked (GlcNAc...) asparagine glycan. N286, N371, N421, N422, and N499 each carry an N-linked (GlcNAc...) asparagine glycan. Intrachain disulfides connect C443–C502, C490–C507, and C492–C509. The helical transmembrane segment at 547–567 (IIIASSAAVAVLATILMVYLY) threads the bilayer. The Cytoplasmic segment spans residues 568–622 (KRKGNAEKYDKMDQPQDYGKSTSRNDEMLDPEASFWGEEKRASHTTPVLMEKPYY). A disordered region spans residues 577 to 607 (DKMDQPQDYGKSTSRNDEMLDPEASFWGEEK).

It belongs to the apicomplexan parasites AMA1 family.

It is found in the membrane. Involved in parasite invasion of erythrocytes. The polypeptide is Apical membrane antigen 1 (AMA-1) (Plasmodium falciparum (isolate Camp / Malaysia)).